A 1074-amino-acid polypeptide reads, in one-letter code: Phospholipase D1 (1074 aa).

The 132-residue stretch at 81–212 (IKAQVLEVER…TEFLDVSQLS (132 aa)) folds into the PX domain. The 110-residue stretch at 219–328 (PKGLEGMIMK…WGGAIEEFIR (110 aa)) folds into the PH domain. Residues Cys-240 and Cys-241 are each lipidated (S-palmitoyl cysteine). Residues 459–486 (YLWAHHEKLVIIDQSVAFVGGIDLAYGR) form the PLD phosphodiesterase 1 domain. The catalytic stretch occupies residues 463 to 928 (HHEKLVIIDQ…MLGKRDSEMA (466 aa)). A phosphoserine mark is found at Ser-499, Ser-561, and Ser-629. Residues 891-918 (ELIYVHSKLLIADDNTVIIGSANINDRS) enclose the PLD phosphodiesterase 2 domain.

This sequence belongs to the phospholipase D family. In terms of assembly, interacts with PIP5K1B. Expressed in kidney, lung, and at a much lower levels, in brain, liver, heart, testis and spleen.

It is found in the cytoplasm. The protein localises to the perinuclear region. It localises to the endoplasmic reticulum membrane. Its subcellular location is the golgi apparatus membrane. The protein resides in the late endosome membrane. The catalysed reaction is a 1,2-diacyl-sn-glycero-3-phosphocholine + H2O = a 1,2-diacyl-sn-glycero-3-phosphate + choline + H(+). It catalyses the reaction ethanol + a 1,2-diacyl-sn-glycero-3-phosphocholine = 1,2-diacyl-sn-glycero-3-phosphoethanol + choline. The enzyme catalyses 1,2-dihexadecanoyl-sn-glycero-3-phosphocholine + H2O = 1,2-dihexadecanoyl-sn-glycero-3-phosphate + choline + H(+). Its activity is regulated as follows. Stimulated by phosphatidylinositol 4,5-bisphosphate and phosphatidylinositol 3,4,5-trisphosphate, activated by the phosphokinase C-alpha, by the ADP-ribosylation factor-1 (ARF-1), and to a lesser extent by GTP-binding proteins: RHO A, RAC-1 and CDC42. Inhibited by oleate. Functionally, function as phospholipase selectivefor phosphatidylcholine. Implicated as a critical step in numerous cellular pathways, including signal transduction, membrane trafficking, and the regulation of mitosis. May be involved in the regulation of perinuclear intravesicular membrane traffic. The sequence is that of Phospholipase D1 from Mus musculus (Mouse).